The chain runs to 129 residues: MEHPSTNYTPEQQHEKLKHYILIPRHLWCYIKYGTHVRYYTTQNVFRVGGFVLQNPYEAVIKNEVKTAIRLQNSFNTKAKGHVTWTVPYDDISKLYAKPDAIMLTIQENVEKALHALNQNVLTLAAKIR.

This sequence belongs to the asfivirus C129R family.

Its subcellular location is the virion. Functionally, plays a role in the inhibition of type I interferon signaling pathway. Mechanistically, specifically interacts with 2',3'-cGAMP and cleaves it via its phosphodiesterase activity. In turn, prevents 2',3'-cGAMP interaction with host ER-resident STING1 leading to inhibition of downstream signaling pathway and type I interferon production. This is an uncharacterized protein from African swine fever virus (isolate Pig/Kenya/KEN-50/1950) (ASFV).